Reading from the N-terminus, the 123-residue chain is Histone H2B (123 aa).

The interval 1–31 is disordered; that stretch reads MPPKTSGKAAKKAGKAQKNITKNDKKKKRKR. Residue Pro2 is modified to N-methylproline; partial. Lys44 is subject to N6-succinyllysine. Ser110 carries an O-linked (GlcNAc) serine glycan. N6-succinyllysine occurs at positions 114 and 118. A Glycyl lysine isopeptide (Lys-Gly) (interchain with G-Cter in ubiquitin) cross-link involves residue Lys118.

This sequence belongs to the histone H2B family. The nucleosome is a histone octamer containing two molecules each of H2A, H2B, H3 and H4 assembled in one H3-H4 heterotetramer and two H2A-H2B heterodimers. The octamer wraps approximately 147 bp of DNA. Post-translationally, phosphorylated by the catalytic component of the Dbf4-dependent kinase (DDK) complex Cdc7. Monoubiquitination of Lys-118 by Bre1 gives a specific tag for epigenetic transcriptional activation and is also prerequisite for histone H3 'Lys-4' and 'Lys-79' methylation. Deubiquitination of Lys-118 by the SAGA complex is involved in activating transcription of a large subset of genes. In terms of processing, methylation at Pro-2 increases upon heat shock. Post-translationally, glcNAcylation at Ser-110 promotes monoubiquitination of Lys-118. It fluctuates in response to extracellular glucose, and associates with transcribed genes.

Its subcellular location is the nucleus. The protein resides in the chromosome. In terms of biological role, core component of nucleosome. Nucleosomes wrap and compact DNA into chromatin, limiting DNA accessibility to the cellular machineries which require DNA as a template. Histones thereby play a central role in transcription regulation, DNA repair, DNA replication and chromosomal stability. DNA accessibility is regulated via a complex set of post-translational modifications of histones, also called histone code, and nucleosome remodeling. The chain is Histone H2B (His2B) from Drosophila sechellia (Fruit fly).